The chain runs to 255 residues: Protein NEN4 (255 aa).

Positions 11-174 constitute an Exonuclease domain; sequence VFFDLETNVP…DDVRMNLEVL (164 aa). Asp-14 and Glu-16 together coordinate Mg(2+). His-161 serves as the catalytic Proton donor/acceptor. Asp-166 contacts Mg(2+).

Mg(2+) serves as cofactor. Expressed in the sieve elements and phloem pole pericycle cells.

Its subcellular location is the nucleus. Functionally, probable exonuclease required for enuclation of sieve elements. The polypeptide is Protein NEN4 (Arabidopsis thaliana (Mouse-ear cress)).